A 423-amino-acid chain; its full sequence is Methylenetetrahydrofolate--tRNA-(uracil-5-)-methyltransferase TrmFO 2 (423 aa).

8–13 is an FAD binding site; it reads GAGLSG.

It belongs to the MnmG family. TrmFO subfamily. FAD is required as a cofactor.

The protein localises to the cytoplasm. The catalysed reaction is uridine(54) in tRNA + (6R)-5,10-methylene-5,6,7,8-tetrahydrofolate + NADH + H(+) = 5-methyluridine(54) in tRNA + (6S)-5,6,7,8-tetrahydrofolate + NAD(+). It carries out the reaction uridine(54) in tRNA + (6R)-5,10-methylene-5,6,7,8-tetrahydrofolate + NADPH + H(+) = 5-methyluridine(54) in tRNA + (6S)-5,6,7,8-tetrahydrofolate + NADP(+). Its function is as follows. Catalyzes the folate-dependent formation of 5-methyl-uridine at position 54 (M-5-U54) in all tRNAs. The sequence is that of Methylenetetrahydrofolate--tRNA-(uracil-5-)-methyltransferase TrmFO 2 from Mycoplasma capricolum subsp. capricolum (strain California kid / ATCC 27343 / NCTC 10154).